The chain runs to 212 residues: Probable GTP-binding protein EngB (212 aa).

The region spanning 38–210 (ALPQIAFVGK…KTSLAKCIKL (173 aa)) is the EngB-type G domain. Residues 46–53 (GKSNVGKS), 73–77 (GRTRQ), 91–94 (DLPG), 158–161 (TKSD), and 189–191 (VSS) each bind GTP. 2 residues coordinate Mg(2+): Ser53 and Thr75.

Belongs to the TRAFAC class TrmE-Era-EngA-EngB-Septin-like GTPase superfamily. EngB GTPase family. Mg(2+) is required as a cofactor.

Necessary for normal cell division and for the maintenance of normal septation. The chain is Probable GTP-binding protein EngB from Rickettsia bellii (strain OSU 85-389).